Consider the following 422-residue polypeptide: Dihydrolipoyllysine-residue succinyltransferase component of 2-oxoglutarate dehydrogenase complex (422 aa).

Positions 1–76 constitute a Lipoyl-binding domain; sequence MPEVKVPELA…EVGQAIAIIG (76 aa). K42 is modified (N6-lipoyllysine). The disordered stretch occupies residues 77 to 185; sequence EGSGNASKEN…SAKEEKKYNQ (109 aa). Composition is skewed to polar residues over residues 80 to 94 and 116 to 130; these read GNAS…TPQQ and NQAN…NATP. In terms of domain architecture, Peripheral subunit-binding (PSBD) spans 127-163; sequence NATPSARRYARENGVNLAEVSPKTNDVVRKEDIDKKQ. The span at 152-163 shows a compositional bias: basic and acidic residues; the sequence is DVVRKEDIDKKQ. Residues 164 to 176 show a composition bias toward low complexity; the sequence is QAPASTQTTQQAS. Active-site residues include H393 and D397.

This sequence belongs to the 2-oxoacid dehydrogenase family. As to quaternary structure, forms a 24-polypeptide structural core with octahedral symmetry. Part of the 2-oxoglutarate dehydrogenase (OGDH) complex composed of E1 (2-oxoglutarate dehydrogenase), E2 (dihydrolipoamide succinyltransferase) and E3 (dihydrolipoamide dehydrogenase); the complex contains multiple copies of the three enzymatic components (E1, E2 and E3). (R)-lipoate serves as cofactor.

The enzyme catalyses N(6)-[(R)-dihydrolipoyl]-L-lysyl-[protein] + succinyl-CoA = N(6)-[(R)-S(8)-succinyldihydrolipoyl]-L-lysyl-[protein] + CoA. The protein operates within amino-acid degradation; L-lysine degradation via saccharopine pathway; glutaryl-CoA from L-lysine: step 6/6. Functionally, E2 component of the 2-oxoglutarate dehydrogenase (OGDH) complex which catalyzes the second step in the conversion of 2-oxoglutarate to succinyl-CoA and CO(2). This chain is Dihydrolipoyllysine-residue succinyltransferase component of 2-oxoglutarate dehydrogenase complex (odhB), found in Staphylococcus aureus (strain USA300).